The sequence spans 60 residues: Large ribosomal subunit protein bL32 (60 aa).

The interval 1-23 (MAVPRNRHSNARKNIRRSHHAKK) is disordered.

It belongs to the bacterial ribosomal protein bL32 family.

The sequence is that of Large ribosomal subunit protein bL32 from Chlamydia caviae (strain ATCC VR-813 / DSM 19441 / 03DC25 / GPIC) (Chlamydophila caviae).